A 1139-amino-acid polypeptide reads, in one-letter code: Replication protein alpha-A (1139 aa).

The methyltransferase stretch occupies residues 60-438 (RRNISSEELQ…DGVKIAPDLI (379 aa)). One can recognise an Alphavirus-like MT domain in the interval 81–305 (SSSACESGTH…HDLKDYLKYV (225 aa)). Positions 611-637 (SPLDLKSIPGSTPSHSSSDSEHSMTEE) are disordered. The span at 617-627 (SIPGSTPSHSS) shows a compositional bias: low complexity. The (+)RNA virus helicase ATP-binding domain maps to 805–969 (DNTKLCNNWL…DYTKTIINPK (165 aa)). Residues 835 to 1109 (LIDGVPGCGK…SRHTKTFTYC (275 aa)) are helicase. 838–845 (GVPGCGKS) is an ATP binding site. Residues 970 to 1139 (LRSYRIPGDV…PIRTFESHIV (170 aa)) enclose the (+)RNA virus helicase C-terminal domain.

As to quaternary structure, interacts with the suppressor of RNA silencing Gamma-B (via C-terminus).

The protein resides in the host chloroplast envelope. The enzyme catalyses ATP + H2O = ADP + phosphate + H(+). Probably contains methyltransferase and helicase activities. Methyltransferase displays a cytoplasmic capping enzyme activity. This function is necessary since all viral RNAs are synthesized in the cytoplasm, and host capping enzymes are restricted to the nucleus. Helicase region probably exhibits NTPase and RNA unwinding activities. The protein is Replication protein alpha-A of Barley stripe mosaic virus (BSMV).